Reading from the N-terminus, the 301-residue chain is Aspartate carbamoyltransferase catalytic subunit (301 aa).

Carbamoyl phosphate-binding residues include R54 and T55. Residue K82 coordinates L-aspartate. Carbamoyl phosphate contacts are provided by R104, H132, and Q135. L-aspartate contacts are provided by R165 and R217. Carbamoyl phosphate is bound by residues G257 and P258.

It belongs to the aspartate/ornithine carbamoyltransferase superfamily. ATCase family. Heterododecamer (2C3:3R2) of six catalytic PyrB chains organized as two trimers (C3), and six regulatory PyrI chains organized as three dimers (R2).

The enzyme catalyses carbamoyl phosphate + L-aspartate = N-carbamoyl-L-aspartate + phosphate + H(+). Its pathway is pyrimidine metabolism; UMP biosynthesis via de novo pathway; (S)-dihydroorotate from bicarbonate: step 2/3. Catalyzes the condensation of carbamoyl phosphate and aspartate to form carbamoyl aspartate and inorganic phosphate, the committed step in the de novo pyrimidine nucleotide biosynthesis pathway. The polypeptide is Aspartate carbamoyltransferase catalytic subunit (Thermus aquaticus).